A 907-amino-acid polypeptide reads, in one-letter code: Protein translocase subunit SecA (907 aa).

ATP contacts are provided by residues glutamine 87, 105 to 109 (GEGKT), and aspartate 512. Zn(2+) is bound by residues cysteine 891, cysteine 893, cysteine 902, and histidine 903.

Belongs to the SecA family. In terms of assembly, monomer and homodimer. Part of the essential Sec protein translocation apparatus which comprises SecA, SecYEG and auxiliary proteins SecDF-YajC and YidC. The cofactor is Zn(2+).

The protein resides in the cell inner membrane. Its subcellular location is the cytoplasm. It catalyses the reaction ATP + H2O + cellular proteinSide 1 = ADP + phosphate + cellular proteinSide 2.. Functionally, part of the Sec protein translocase complex. Interacts with the SecYEG preprotein conducting channel. Has a central role in coupling the hydrolysis of ATP to the transfer of proteins into and across the cell membrane, serving both as a receptor for the preprotein-SecB complex and as an ATP-driven molecular motor driving the stepwise translocation of polypeptide chains across the membrane. The protein is Protein translocase subunit SecA of Shewanella loihica (strain ATCC BAA-1088 / PV-4).